Here is a 1031-residue protein sequence, read N- to C-terminus: Toll-like receptor 9 (1031 aa).

A signal peptide spans 1–25 (MGPCHGALHPLSLLVQAAALAVALA). The Extracellular segment spans residues 26–817 (QGTLPAFLPC…LCLDEALSWD (792 aa)). Cys-35 and Cys-45 form a disulfide bridge. 47–51 (WLFLK) contacts DNA. 26 LRR repeats span residues 62-85 (RGNV…DFVH), 87-110 (SSLR…HFPC), 122-147 (VPTL…SLVS), 150-166 (LSRT…LAGL), 167-190 (HSLR…ALQV), 198-221 (LGNL…LPPS), 223-242 (EYLL…DLAN), 243-268 (LTAL…CMEC), 283-306 (LNHL…WFHA), 308-332 (GNLM…AFQG), 333-356 (LAQL…HLHL), 363-386 (LLSL…TLRS), 390-413 (LPML…IFGA), 415-440 (PGLR…TGEV), 470-494 (CKTL…MFAR), 496-519 (SRLQ…QFMP), 520-543 (LTSL…SFTE), 545-572 (PRLE…SFVA), 574-598 (LPAL…LCSA), 600-622 (LRAL…LYLH), 627-650 (LRSL…TLDN), 652-675 (PKSL…SLVL), 676-699 (LPRL…SLPN), 701-723 (TQLQ…FFAL), 724-747 (ATRL…WFGS), and 749-772 (AGTL…AFVD). Asn-64 carries N-linked (GlcNAc...) asparagine glycosylation. DNA contacts are provided by residues 72–77 (SNRIHH) and 95–109 (KWNC…MHFP). Cys-98 and Cys-110 form a disulfide bridge. Asn-129 carries N-linked (GlcNAc...) asparagine glycosylation. Residues Tyr-132, Arg-152, and 179-181 (YYK) contribute to the DNA site. Cysteines 178 and 184 form a disulfide. An N-linked (GlcNAc...) asparagine glycan is attached at Asn-200. Position 208 (Tyr-208) interacts with DNA. Asn-210 and Asn-242 each carry an N-linked (GlcNAc...) asparagine glycan. 2 cysteine pairs are disulfide-bonded: Cys-255/Cys-268 and Cys-258/Cys-265. Cys-258 carries the S-palmitoyl cysteine lipid modification. Residue Arg-262 coordinates DNA. Residue Cys-265 is the site of S-palmitoyl cysteine attachment. Asn-340 is a glycosylation site (N-linked (GlcNAc...) asparagine). Cys-470 and Cys-500 are joined by a disulfide. N-linked (GlcNAc...) asparagine glycosylation is found at Asn-474 and Asn-513. Residue Asn-567 is glycosylated (N-linked (GlcNAc...) asparagine). N-linked (GlcNAc...) asparagine glycosylation is found at Asn-669, Asn-694, and Asn-699. A glycan (N-linked (GlcNAc...) asparagine) is linked at Asn-731. 2 cysteine pairs are disulfide-bonded: Cys-764/Cys-790 and Cys-766/Cys-809. Residues 818 to 838 (CFGLSLLTVALGLAVPMLHHL) traverse the membrane as a helical segment. At 839–1031 (CGWDLWYCFH…NFCRGPTTAE (193 aa)) the chain is on the cytoplasmic side. The TIR domain maps to 866-1011 (LPYDAFVVFD…SFWAQLGTAL (146 aa)).

This sequence belongs to the Toll-like receptor family. Monomer and homodimer. Exists as a monomer in the absence of unmethylated cytidine-phosphate-guanosine (CpG) ligand. Proteolytic processing of an insertion loop (Z-loop) is required for homodimerization upon binding to the unmethylated CpG ligand leading to its activation. Interacts with MYD88 via their respective TIR domains. Interacts with BTK. Interacts (via transmembrane domain) with UNC93B1. Interacts with CD300LH; the interaction may promote full activation of TLR9-triggered innate responses. Interacts with CNPY3 and HSP90B1; this interaction is required for proper folding in the endoplasmic reticulum. Interacts with SMPDL3B. Interacts with CD82; this interaction is essential for TLR9-dependent myddosome formation in response to CpG stimulation. Activated by proteolytic cleavage of the flexible loop between repeats LRR14 and LRR15 within the ectodomain. Cleavage requires UNC93B1. Proteolytically processed by first removing the majority of the ectodomain by either asparagine endopeptidase (AEP) or a cathepsin followed by a trimming event that is solely cathepsin mediated and required for optimal receptor signaling. Post-translationally, palmitoylated by ZDHHC3 in the Golgi regulates TLR9 trafficking from the Golgi to endosomes. Depalmitoylation by PPT1 controls the release of TLR9 from UNC93B1 in endosomes.

The protein resides in the endoplasmic reticulum membrane. It localises to the endosome. Its subcellular location is the lysosome. It is found in the cytoplasmic vesicle. The protein localises to the phagosome. In terms of biological role, key component of innate and adaptive immunity. TLRs (Toll-like receptors) control host immune response against pathogens through recognition of molecular patterns specific to microorganisms. TLR9 is a nucleotide-sensing TLR which is activated by unmethylated cytidine-phosphate-guanosine (CpG) dinucleotides. Acts via MYD88 and TRAF6, leading to NF-kappa-B activation, cytokine secretion and the inflammatory response. Upon CpG stimulation, induces B-cell proliferation, activation, survival and antibody production. The protein is Toll-like receptor 9 (TLR9) of Felis catus (Cat).